A 381-amino-acid chain; its full sequence is MKNISILGSTGSIGTQTLDVVRNHPEKFKIVALSASGNIDAIENQIHEFHPEIVAVFHREKAEILSARIGKKVKVVSGIEGLIEVATLDSADIVVTSVVGSIGLIPTVEAIRCGKTIALANKETLVVAGELIKKEAEKHKVQIIPVDSEHSAIFQCLQGEDIHNISRIILTASGGAFRNWEKQDIQHAKAQDALKHPTWNMGSKVTIDSASLMNKGLEVMEARWLFNVELDKIDVIVHPQSIVHSMVEYNDFSIIAQIGAPDMRGPIQYALSYPNRINSSIERLDFRKISALTFMAPDTDKFPCLSLAYESLKIGKTMPCVLNGANEVLVEYFLEDRIGFYDIPKFIEKAMSAHKPWVYTDIEELLEVDRWVRNWIKEQIE.

The NADPH site is built by Thr10, Gly11, Ser12, Ile13, Asn38, and Asn121. A 1-deoxy-D-xylulose 5-phosphate-binding site is contributed by Lys122. Position 123 (Glu123) interacts with NADPH. Position 147 (Asp147) interacts with Mn(2+). Positions 148, 149, 173, and 196 each coordinate 1-deoxy-D-xylulose 5-phosphate. Residue Glu149 participates in Mn(2+) binding. NADPH is bound at residue Gly202. Ser209, Asn214, Lys215, and Glu218 together coordinate 1-deoxy-D-xylulose 5-phosphate. Glu218 provides a ligand contact to Mn(2+).

The protein belongs to the DXR family. Mg(2+) serves as cofactor. Requires Mn(2+) as cofactor.

It catalyses the reaction 2-C-methyl-D-erythritol 4-phosphate + NADP(+) = 1-deoxy-D-xylulose 5-phosphate + NADPH + H(+). The protein operates within isoprenoid biosynthesis; isopentenyl diphosphate biosynthesis via DXP pathway; isopentenyl diphosphate from 1-deoxy-D-xylulose 5-phosphate: step 1/6. Functionally, catalyzes the NADPH-dependent rearrangement and reduction of 1-deoxy-D-xylulose-5-phosphate (DXP) to 2-C-methyl-D-erythritol 4-phosphate (MEP). The protein is 1-deoxy-D-xylulose 5-phosphate reductoisomerase of Alkaliphilus oremlandii (strain OhILAs) (Clostridium oremlandii (strain OhILAs)).